Consider the following 502-residue polypeptide: Probable cytosol aminopeptidase (502 aa).

2 residues coordinate Mn(2+): K265 and D270. K277 is a catalytic residue. 3 residues coordinate Mn(2+): D288, D347, and E349. R351 is an active-site residue.

Belongs to the peptidase M17 family. Mn(2+) serves as cofactor.

It localises to the cytoplasm. It carries out the reaction Release of an N-terminal amino acid, Xaa-|-Yaa-, in which Xaa is preferably Leu, but may be other amino acids including Pro although not Arg or Lys, and Yaa may be Pro. Amino acid amides and methyl esters are also readily hydrolyzed, but rates on arylamides are exceedingly low.. It catalyses the reaction Release of an N-terminal amino acid, preferentially leucine, but not glutamic or aspartic acids.. In terms of biological role, presumably involved in the processing and regular turnover of intracellular proteins. Catalyzes the removal of unsubstituted N-terminal amino acids from various peptides. This is Probable cytosol aminopeptidase from Rickettsia bellii (strain RML369-C).